The sequence spans 679 residues: Protein hook (679 aa).

Positions 5–123 (NGMYYSLLEW…RLLQLVLGCA (119 aa)) constitute a Calponin-homology (CH) domain. A coiled-coil region spans residues 140-627 (EEELQANIMR…SKTKMSTMEE (488 aa)).

Belongs to the hook family. In terms of assembly, homodimer. Interacts with microtubules via its N-terminus.

The protein resides in the cytoplasm. It localises to the cytoskeleton. It is found in the endosome. Its subcellular location is the synapse. Its function is as follows. Involved in endocytic trafficking by stabilizing organelles of the endocytic pathway. Probably acts as a cytoskeletal linker protein required to tether endosome vesicles to the cytoskeleton. Involved in modulation of endocytosis at stages required for down-regulation of membrane proteins that control synapse size. Not involved in synaptic vesicle recycling. Required in R7 cells for boss endocytosis into multivesicular bodies (MVBs). Has a role in regulating adult longevity. The sequence is that of Protein hook from Drosophila mojavensis (Fruit fly).